We begin with the raw amino-acid sequence, 95 residues long: Large ribosomal subunit protein eL31 (95 aa).

It belongs to the eukaryotic ribosomal protein eL31 family. Part of the 50S ribosomal subunit.

The chain is Large ribosomal subunit protein eL31 from Pyrococcus furiosus (strain ATCC 43587 / DSM 3638 / JCM 8422 / Vc1).